We begin with the raw amino-acid sequence, 311 residues long: L-lactate dehydrogenase (311 aa).

Residues V12, D33, K38, Y63, and G77 to A78 contribute to the NAD(+) site. Positions 80 and 86 each coordinate substrate. NAD(+) is bound by residues S99, V116–N118, and S141. N118 to D121 contributes to the substrate binding site. D146–R149 contacts substrate. Beta-D-fructose 1,6-bisphosphate contacts are provided by R151 and H166. Catalysis depends on H173, which acts as the Proton acceptor. At Y219 the chain carries Phosphotyrosine. T228 is a substrate binding site.

This sequence belongs to the LDH/MDH superfamily. LDH family. Homotetramer.

The protein resides in the cytoplasm. It catalyses the reaction (S)-lactate + NAD(+) = pyruvate + NADH + H(+). It participates in fermentation; pyruvate fermentation to lactate; (S)-lactate from pyruvate: step 1/1. Allosterically activated by fructose 1,6-bisphosphate (FBP). Functionally, catalyzes the conversion of lactate to pyruvate. This is L-lactate dehydrogenase from Thermoanaerobacterium saccharolyticum (strain DSM 8691 / JW/SL-YS485).